The sequence spans 430 residues: Adenylosuccinate synthetase (430 aa).

GTP is bound by residues 12 to 18 (GDEGKGK) and 40 to 42 (GHT). Catalysis depends on D13, which acts as the Proton acceptor. D13 and G40 together coordinate Mg(2+). IMP contacts are provided by residues 13–16 (DEGK), 38–41 (NAGH), T128, R142, Q223, T238, and R302. H41 (proton donor) is an active-site residue. Position 298 to 304 (298 to 304 (TTTGRPR)) interacts with substrate. Residues R304, 330 to 332 (CID), and 412 to 414 (SVG) each bind GTP.

The protein belongs to the adenylosuccinate synthetase family. In terms of assembly, homodimer. Requires Mg(2+) as cofactor.

The protein resides in the cytoplasm. It catalyses the reaction IMP + L-aspartate + GTP = N(6)-(1,2-dicarboxyethyl)-AMP + GDP + phosphate + 2 H(+). Its pathway is purine metabolism; AMP biosynthesis via de novo pathway; AMP from IMP: step 1/2. Plays an important role in the de novo pathway of purine nucleotide biosynthesis. Catalyzes the first committed step in the biosynthesis of AMP from IMP. The protein is Adenylosuccinate synthetase of Streptococcus thermophilus (strain CNRZ 1066).